The primary structure comprises 469 residues: Citrate synthase, mitochondrial (469 aa).

Residues 1–30 (MSFLSVSRLAPKLLNSKNATYFLVAARNAS) constitute a mitochondrion transit peptide. Catalysis depends on residues His-304 and His-350. Arg-359 contacts oxaloacetate. Asp-405 is an active-site residue. Oxaloacetate contacts are provided by Arg-431 and Arg-451.

The protein belongs to the citrate synthase family. As to quaternary structure, homodimer.

It localises to the mitochondrion matrix. It carries out the reaction oxaloacetate + acetyl-CoA + H2O = citrate + CoA + H(+). The protein operates within carbohydrate metabolism; tricarboxylic acid cycle; isocitrate from oxaloacetate: step 1/2. In terms of biological role, key enzyme of the Krebs tricarboxylic acid cycle which catalyzes the synthesis of citrate from acetyl coenzyme A and oxaloacetate. The polypeptide is Citrate synthase, mitochondrial (cs) (Katsuwonus pelamis (Skipjack tuna)).